Here is a 409-residue protein sequence, read N- to C-terminus: Peptidase T (409 aa).

Zn(2+) is bound at residue His80. Asp82 is an active-site residue. Asp143 contributes to the Zn(2+) binding site. Residue Glu177 is the Proton acceptor of the active site. Zn(2+) contacts are provided by Glu178, Asp200, and His382.

The protein belongs to the peptidase M20B family. It depends on Zn(2+) as a cofactor.

It is found in the cytoplasm. It carries out the reaction Release of the N-terminal residue from a tripeptide.. Functionally, cleaves the N-terminal amino acid of tripeptides. The chain is Peptidase T from Enterococcus faecalis (strain ATCC 700802 / V583).